Here is a 332-residue protein sequence, read N- to C-terminus: Anthranilate phosphoribosyltransferase (332 aa).

Residues G79, 82–83, T87, 89–92, 107–115, and S119 contribute to the 5-phospho-alpha-D-ribose 1-diphosphate site; these read GD, NIST, and KHGNRGVSS. G79 contributes to the anthranilate binding site. Residue S91 coordinates Mg(2+). N110 contributes to the anthranilate binding site. R165 provides a ligand contact to anthranilate. Positions 223 and 224 each coordinate Mg(2+).

It belongs to the anthranilate phosphoribosyltransferase family. As to quaternary structure, homodimer. Requires Mg(2+) as cofactor.

The enzyme catalyses N-(5-phospho-beta-D-ribosyl)anthranilate + diphosphate = 5-phospho-alpha-D-ribose 1-diphosphate + anthranilate. It participates in amino-acid biosynthesis; L-tryptophan biosynthesis; L-tryptophan from chorismate: step 2/5. Catalyzes the transfer of the phosphoribosyl group of 5-phosphorylribose-1-pyrophosphate (PRPP) to anthranilate to yield N-(5'-phosphoribosyl)-anthranilate (PRA). The polypeptide is Anthranilate phosphoribosyltransferase (Vibrio cholerae serotype O1 (strain ATCC 39541 / Classical Ogawa 395 / O395)).